Here is a 724-residue protein sequence, read N- to C-terminus: Protein Aster-A (724 aa).

A compositionally biased stretch (low complexity) spans M1 to S18. Positions M1 to R66 are disordered. Polar residues predominate over residues T57–R66. The GRAM domain maps to E91–K158. A disordered region spans residues S256–L336. A phosphoserine mark is found at S263, S267, and S271. The span at D300–T312 shows a compositional bias: polar residues. Low complexity predominate over residues D326–L336. The 172-residue stretch at S367–L538 folds into the VASt domain. A Phosphoserine modification is found at S415. Positions S560 to A579 are disordered. Basic and acidic residues predominate over residues A563 to P575. Residues L610 to F630 form a helical membrane-spanning segment.

As to expression, expressed in liver.

It localises to the endoplasmic reticulum membrane. The protein resides in the cell membrane. It is found in the cytoplasmic vesicle. Its subcellular location is the autophagosome. Cholesterol transporter that mediates non-vesicular transport of cholesterol from the plasma membrane (PM) to the endoplasmic reticulum (ER). Contains unique domains for binding cholesterol and the PM, thereby serving as a molecular bridge for the transfer of cholesterol from the PM to the ER. Plays a crucial role in cholesterol homeostasis and has the unique ability to localize to the PM based on the level of membrane cholesterol. In lipid-poor conditions localizes to the ER membrane and in response to excess cholesterol in the PM is recruited to the endoplasmic reticulum-plasma membrane contact sites (EPCS) which is mediated by the GRAM domain. At the EPCS, the sterol-binding VASt/ASTER domain binds to the cholesterol in the PM and facilitates its transfer from the PM to ER. May play a role in tumor progression. Plays a role in autophagy regulation and is required for biogenesis of the autophagosome. This function in autophagy requires its cholesterol-transfer activity. The protein is Protein Aster-A of Homo sapiens (Human).